Consider the following 325-residue polypeptide: 4-hydroxy-3-methylbut-2-enyl diphosphate reductase (325 aa).

Residue Cys-25 participates in [4Fe-4S] cluster binding. 2 residues coordinate (2E)-4-hydroxy-3-methylbut-2-enyl diphosphate: His-54 and His-87. Positions 54 and 87 each coordinate dimethylallyl diphosphate. Isopentenyl diphosphate-binding residues include His-54 and His-87. Position 109 (Cys-109) interacts with [4Fe-4S] cluster. Residue His-137 participates in (2E)-4-hydroxy-3-methylbut-2-enyl diphosphate binding. His-137 contacts dimethylallyl diphosphate. An isopentenyl diphosphate-binding site is contributed by His-137. The active-site Proton donor is Glu-139. Thr-179 is a binding site for (2E)-4-hydroxy-3-methylbut-2-enyl diphosphate. Cys-209 lines the [4Fe-4S] cluster pocket. (2E)-4-hydroxy-3-methylbut-2-enyl diphosphate is bound by residues Ser-237, Ser-238, Asn-239, and Ser-282. The dimethylallyl diphosphate site is built by Ser-237, Ser-238, Asn-239, and Ser-282. Ser-237, Ser-238, Asn-239, and Ser-282 together coordinate isopentenyl diphosphate.

It belongs to the IspH family. [4Fe-4S] cluster is required as a cofactor.

The catalysed reaction is isopentenyl diphosphate + 2 oxidized [2Fe-2S]-[ferredoxin] + H2O = (2E)-4-hydroxy-3-methylbut-2-enyl diphosphate + 2 reduced [2Fe-2S]-[ferredoxin] + 2 H(+). The enzyme catalyses dimethylallyl diphosphate + 2 oxidized [2Fe-2S]-[ferredoxin] + H2O = (2E)-4-hydroxy-3-methylbut-2-enyl diphosphate + 2 reduced [2Fe-2S]-[ferredoxin] + 2 H(+). The protein operates within isoprenoid biosynthesis; dimethylallyl diphosphate biosynthesis; dimethylallyl diphosphate from (2E)-4-hydroxy-3-methylbutenyl diphosphate: step 1/1. Its pathway is isoprenoid biosynthesis; isopentenyl diphosphate biosynthesis via DXP pathway; isopentenyl diphosphate from 1-deoxy-D-xylulose 5-phosphate: step 6/6. In terms of biological role, catalyzes the conversion of 1-hydroxy-2-methyl-2-(E)-butenyl 4-diphosphate (HMBPP) into a mixture of isopentenyl diphosphate (IPP) and dimethylallyl diphosphate (DMAPP). Acts in the terminal step of the DOXP/MEP pathway for isoprenoid precursor biosynthesis. The protein is 4-hydroxy-3-methylbut-2-enyl diphosphate reductase of Corynebacterium glutamicum (strain ATCC 13032 / DSM 20300 / JCM 1318 / BCRC 11384 / CCUG 27702 / LMG 3730 / NBRC 12168 / NCIMB 10025 / NRRL B-2784 / 534).